The chain runs to 168 residues: Zinc-finger homeodomain protein 14 (168 aa).

A ZF-HD dimerization-type; degenerate zinc finger spans residues 7–51 (YRECMRNHAAKLGSYAIDGCREYSQPSTGDLCVACGCHRSYHRRI). The stretch at 76-103 (ARLKWKTAEERNEEEEDDTEETSTEEKM) forms a coiled coil. The disordered stretch occupies residues 82–112 (TAEERNEEEEDDTEETSTEEKMTVQRRRKSK). The span at 86–98 (RNEEEEDDTEETS) shows a compositional bias: acidic residues. The homeobox DNA-binding region spans 106-168 (QRRRKSKFTA…WVNNNKKFYH (63 aa)).

In terms of assembly, homo- and heterodimer with other ZFHD proteins. Interacts with ZHD11. As to expression, mostly expressed in flowers and stems.

The protein localises to the nucleus. Its function is as follows. Putative transcription factor. This chain is Zinc-finger homeodomain protein 14 (ZHD14), found in Arabidopsis thaliana (Mouse-ear cress).